The sequence spans 203 residues: Suppressor of RNA silencing p3 (203 aa).

Belongs to the tenuiviruses p3 protein family. As to quaternary structure, homodimer.

The protein localises to the host cytoplasm. Functionally, acts as a suppressor of RNA-mediated gene silencing, also known as post-transcriptional gene silencing (PTGS), presumably through the binding of dsRNA. This is Suppressor of RNA silencing p3 from Oryza sativa (Rice).